Consider the following 106-residue polypeptide: Large ribosomal subunit protein uL24 (106 aa).

The protein belongs to the universal ribosomal protein uL24 family. In terms of assembly, part of the 50S ribosomal subunit.

Functionally, one of two assembly initiator proteins, it binds directly to the 5'-end of the 23S rRNA, where it nucleates assembly of the 50S subunit. Its function is as follows. One of the proteins that surrounds the polypeptide exit tunnel on the outside of the subunit. This chain is Large ribosomal subunit protein uL24, found in Dechloromonas aromatica (strain RCB).